The primary structure comprises 346 residues: Melatonin receptor type 1C (346 aa).

The Extracellular portion of the chain corresponds to 1 to 26 (MERPGSNGSCSGCRLEGGPAARAASG). Residue asparagine 7 is glycosylated (N-linked (GlcNAc...) asparagine). Residues 27–47 (LAAVLIVTIVVDVLGNALVIL) traverse the membrane as a helical segment. Residues 48–60 (SVLRNKKLRNAGN) are Cytoplasmic-facing. The helical transmembrane segment at 61 to 81 (IFVVSLSVADLVVAVYPYPLI) threads the bilayer. The Extracellular portion of the chain corresponds to 82-99 (LSAIFHNGWTMGNIHCQI). A disulfide bridge connects residues cysteine 97 and cysteine 174. The helical transmembrane segment at 100–120 (SGFLMGLSVIGSIFNITAIAI) threads the bilayer. At 121–139 (NRYCYICHSLRYDKLFNLK) the chain is on the cytoplasmic side. A helical membrane pass occupies residues 140–160 (NTCCYICLTWTLTVVAIVPNF). Residues 161 to 184 (FVGSLQYDPRIYSCTFAQTVSTSY) lie on the Extracellular side of the membrane. The helical transmembrane segment at 185–205 (TITVVVVHFIVPLSIVTFCYL) threads the bilayer. Residues 206–237 (RIWILVIQVKHRVRQDCKQKIRAADIRNFLTM) lie on the Cytoplasmic side of the membrane. A helical membrane pass occupies residues 238–258 (FVVFVLFAVCWGPLNFIGLAV). The Extracellular segment spans residues 259-271 (SINPSKVQPHIPE). A helical transmembrane segment spans residues 272–292 (WLFVLSYFMAYFNSCLNAVIY). The Cytoplasmic portion of the chain corresponds to 293–346 (GLLNQNFRKEYKRILLMLRTPRLLFIDVSKGGTEGLKSKPSPAVTNNNQAEIHL). The interval 326-346 (EGLKSKPSPAVTNNNQAEIHL) is disordered. The span at 335–346 (AVTNNNQAEIHL) shows a compositional bias: polar residues.

Belongs to the G-protein coupled receptor 1 family. As to expression, expressed in optic tectum, neostriatum, hypothalamus, thalamus and pineal gland, less in cerebellum and retina.

Its subcellular location is the cell membrane. Its function is as follows. High affinity receptor for melatonin. The activity of this receptor is mediated by pertussis toxin sensitive G proteins that inhibits adenylate cyclase activity. The sequence is that of Melatonin receptor type 1C from Gallus gallus (Chicken).